We begin with the raw amino-acid sequence, 904 residues long: Protein translocase subunit SecA (904 aa).

ATP contacts are provided by residues glutamine 89, 107 to 111 (GEGKT), and aspartate 502. The Zn(2+) site is built by cysteine 888, cysteine 890, cysteine 899, and histidine 900.

This sequence belongs to the SecA family. In terms of assembly, monomer and homodimer. Part of the essential Sec protein translocation apparatus which comprises SecA, SecYEG and auxiliary proteins SecDF-YajC and YidC. Zn(2+) serves as cofactor.

It is found in the cell inner membrane. It localises to the cytoplasm. The catalysed reaction is ATP + H2O + cellular proteinSide 1 = ADP + phosphate + cellular proteinSide 2.. Its function is as follows. Part of the Sec protein translocase complex. Interacts with the SecYEG preprotein conducting channel. Has a central role in coupling the hydrolysis of ATP to the transfer of proteins into and across the cell membrane, serving both as a receptor for the preprotein-SecB complex and as an ATP-driven molecular motor driving the stepwise translocation of polypeptide chains across the membrane. This is Protein translocase subunit SecA from Roseobacter denitrificans (strain ATCC 33942 / OCh 114) (Erythrobacter sp. (strain OCh 114)).